A 504-amino-acid chain; its full sequence is Calcium/calmodulin-dependent protein kinase type II (504 aa).

In terms of domain architecture, Protein kinase spans tyrosine 65–isoleucine 351. Residues leucine 71–valine 79 and lysine 94 each bind ATP. Residue aspartate 188 is the Proton acceptor of the active site. Phosphothreonine is present on threonine 252.

This sequence belongs to the protein kinase superfamily. CAMK Ser/Thr protein kinase family. CaMK subfamily. Interacts with sty1. It depends on Mg(2+) as a cofactor. Autophosphorylated.

It localises to the cytoplasm. The protein localises to the barrier septum. The protein resides in the forespore membrane. Its subcellular location is the ascus epiplasm. The catalysed reaction is L-seryl-[protein] + ATP = O-phospho-L-seryl-[protein] + ADP + H(+). It catalyses the reaction L-threonyl-[protein] + ATP = O-phospho-L-threonyl-[protein] + ADP + H(+). Functionally, has a role in the regulation of G2/M transition during the mitotic cell cycle. The chain is Calcium/calmodulin-dependent protein kinase type II from Schizosaccharomyces pombe (strain 972 / ATCC 24843) (Fission yeast).